A 452-amino-acid polypeptide reads, in one-letter code: Sensor histidine kinase HprS (452 aa).

At 1-9 the chain is on the cytoplasmic side; sequence MKRLSITVR. Residues 10-30 traverse the membrane as a helical segment; sequence LTLLFILLLSVAGAGIVWTLY. At 31–158 the chain is on the periplasmic side; sequence NGLASELKWR…ARHNMLEQYK (128 aa). A helical membrane pass occupies residues 159–179; that stretch reads INSIIICIVAIVLCSVLSPLL. The Cytoplasmic portion of the chain corresponds to 180 to 452; that stretch reads IRTGLREIKK…VFRITLPQRN (273 aa). The HAMP domain maps to 181 to 234; sequence RTGLREIKKLSGVTEALNYNDSREPVEVSALPRELKPLGQALNKMHHALVKDFE. Positions 242–452 constitute a Histidine kinase domain; it reads DLAHELRTPI…VFRITLPQRN (211 aa). A Phosphohistidine; by autocatalysis modification is found at H245.

Post-translationally, autophosphorylated.

The protein resides in the cell inner membrane. The enzyme catalyses ATP + protein L-histidine = ADP + protein N-phospho-L-histidine.. Functionally, member of a two-component regulatory system HprR/HprS involved in response to hydrogen peroxide. Senses H(2)O(2), maybe via the redox state of the membrane. Activates HprR by phosphorylation. Can also phosphorylate CusR. This Escherichia coli (strain K12) protein is Sensor histidine kinase HprS.